Here is a 378-residue protein sequence, read N- to C-terminus: MFSSIYGYFNSEGDSNQQQNNNNNSNNNLKESVFHSGISNGIIETVGNTPLIRIKSLSEATGCEIYGKAEFMNPGGSPKDRVAREIILDGEKKGLLKKGSTIVEATAGSTGISLTMLGKSRGYNVQLFIPDNVSKEKVDLLEMLGAETKIVPIVGMNNANHFMHCAYQRCLGDDMAFYANQFDNLSNFNAHYNGTAKEIWEQTKGDVDGFVAAAGTGGTVAGISSYLKEVNPNIQNWLIDPPGSGLYSLVNTGVIFHPKDRLVVEKLGPRSFYEGVGVNKKTENFNKASLNGAFRGTEEEGVDMAHYLLKHDGLFLGGSSALNCVGAVKLARKLGPGKTIVTVLCDSGHRYTSRLYSKSWLNDHNFQVSDLSNLNFVK.

Residues 10-31 (NSEGDSNQQQNNNNNSNNNLKE) form a disordered region. A compositionally biased stretch (low complexity) spans 15-28 (SNQQQNNNNNSNNN). The residue at position 79 (lysine 79) is an N6-(pyridoxal phosphate)lysine. Residues 215-219 (GTGGT) and serine 319 contribute to the pyridoxal 5'-phosphate site.

Belongs to the cysteine synthase/cystathionine beta-synthase family. Pyridoxal 5'-phosphate is required as a cofactor.

The catalysed reaction is O-acetyl-L-serine + hydrogen sulfide = L-cysteine + acetate. Its pathway is amino-acid biosynthesis; L-cysteine biosynthesis; L-cysteine from L-serine: step 2/2. The polypeptide is Cysteine synthase (cysK) (Dictyostelium discoideum (Social amoeba)).